The primary structure comprises 417 residues: BSD domain-containing protein 1-B (417 aa).

The BSD domain occupies 153-205; sequence WLAYWDPEQRKAEISEPLVTSPSIRALFTKMVPAAVSHSEFWQRYFYKVHQLE. Disordered regions lie at residues 215–234, 262–292, and 323–390; these read KQRA…EEEE, HVED…SISP, and AAET…DFDM. Basic and acidic residues predominate over residues 262–278; that stretch reads HVEDKSEKTAELNRDHT. The span at 281-292 shows a compositional bias: low complexity; the sequence is TSPSESSESISP. Over residues 332-343 the composition is skewed to polar residues; sequence PVEQTGKSNAQM. The span at 345-356 shows a compositional bias: basic and acidic residues; it reads THREDPPSDLRV. Over residues 360-379 the composition is skewed to polar residues; that stretch reads NSDSGKSTPSNNGQKGSSTD. Acidic residues predominate over residues 380–390; that stretch reads VSEDWEKDFDM.

The polypeptide is BSD domain-containing protein 1-B (bsdc1-b) (Xenopus laevis (African clawed frog)).